A 313-amino-acid chain; its full sequence is Acetaldehyde dehydrogenase 3 (313 aa).

Residue 11 to 14 (SGNI) coordinates NAD(+). C129 (acyl-thioester intermediate) is an active-site residue. NAD(+)-binding positions include 160–168 (SAGPGTRAN) and N288.

It belongs to the acetaldehyde dehydrogenase family.

It catalyses the reaction acetaldehyde + NAD(+) + CoA = acetyl-CoA + NADH + H(+). In Rhizorhabdus wittichii (strain DSM 6014 / CCUG 31198 / JCM 15750 / NBRC 105917 / EY 4224 / RW1) (Sphingomonas wittichii), this protein is Acetaldehyde dehydrogenase 3.